Here is a 232-residue protein sequence, read N- to C-terminus: Aspartate racemase (232 aa).

49–51 (DRT) contacts substrate. Residue Cys84 is the Proton donor/acceptor of the active site. Residues 85-87 (NTA) and Lys166 each bind substrate. Catalysis depends on Cys195, which acts as the Proton donor/acceptor.

Belongs to the aspartate/glutamate racemases family.

It catalyses the reaction L-aspartate = D-aspartate. In Thermococcus sp. (strain KS-8), this protein is Aspartate racemase.